The sequence spans 255 residues: Small ribosomal subunit protein uS3c (255 aa).

The KH type-2 domain occupies 51–124 (IRESSNTSYG…NKNQNKNTGQ (74 aa)). Residues 96-121 (EKNRDKNKSNKNSALDQSVNKNQNKN) are disordered. Over residues 108–121 (SALDQSVNKNQNKN) the composition is skewed to polar residues.

This sequence belongs to the universal ribosomal protein uS3 family. As to quaternary structure, part of the 30S ribosomal subunit.

It localises to the plastid. The protein localises to the chloroplast. The chain is Small ribosomal subunit protein uS3c (rps3) from Chaetosphaeridium globosum (Charophycean green alga).